The chain runs to 394 residues: Elongation factor Tu 2 (394 aa).

The tr-type G domain occupies 10 to 204 (KPHVNVGTIG…ALDSYIPQPE (195 aa)). The tract at residues 19 to 26 (GHVDHGKT) is G1. Position 19-26 (19-26 (GHVDHGKT)) interacts with GTP. Thr26 is a binding site for Mg(2+). Positions 60–64 (GITIN) are G2. A G3 region spans residues 81–84 (DCPG). GTP is bound by residues 81–85 (DCPGH) and 136–139 (NKCD). The interval 136-139 (NKCD) is G4. The tract at residues 174 to 176 (SAL) is G5.

It belongs to the TRAFAC class translation factor GTPase superfamily. Classic translation factor GTPase family. EF-Tu/EF-1A subfamily. In terms of assembly, monomer.

It localises to the cytoplasm. The enzyme catalyses GTP + H2O = GDP + phosphate + H(+). In terms of biological role, GTP hydrolase that promotes the GTP-dependent binding of aminoacyl-tRNA to the A-site of ribosomes during protein biosynthesis. The polypeptide is Elongation factor Tu 2 (Yersinia pestis bv. Antiqua (strain Antiqua)).